Reading from the N-terminus, the 309-residue chain is Caspase-7 (309 aa).

Positions 1–24 (MSGDQHADRSSGEKSNGDQDDTVD) are cleaved as a propeptide — N-terminally processed. Residues 1 to 31 (MSGDQHADRSSGEKSNGDQDDTVDAKPDRSS) show a composition bias toward basic and acidic residues. Residues 1 to 53 (MSGDQHADRSSGEKSNGDQDDTVDAKPDRSSRLSLFAKKKKNGEEEQPKSSLS) form a disordered region. Residues 39–42 (KKKN) form an exosite region. The segment at 81 to 92 (KNFEDKTGMGTR) is loop L1. Catalysis depends on residues H149 and C191. Residues 192–201 (RGSEFDEGIQ) form a loop L2 region. The propeptide occupies 204 to 214 (SGPANDTLETD). Residues 234 to 246 (VPGYYSWRNPGRG) form a loop L3 region. Positions 282–296 (ESQSDDPRFSEKKQI) are loop L4.

It belongs to the peptidase C14A family. Heterotetramer that consists of two anti-parallel arranged heterodimers, each one formed by a 20 kDa (p20) and a 11 kDa (p11) subunit. Cleavage by different proteases, such as granzyme B (GZMB), caspase-1 (CASP1), caspase-8 (CASP8) or caspase-9 (CASP9) generate the two active subunits. Its involvement in different programmed cell death processes is probably specified by the protease that activates CASP7. Cleaved and activated by initiator caspases (CASP8 and/or CASP9), leading to execution phase of apoptosis. Cleavage and maturation by GZMB regulates granzyme-mediated programmed cell death. Cleaved and activated by CASP1 in response to bacterial infection.

It is found in the cytoplasm. It localises to the cytosol. The protein localises to the nucleus. The protein resides in the secreted. Its subcellular location is the extracellular space. It carries out the reaction Strict requirement for an Asp residue at position P1 and has a preferred cleavage sequence of Asp-Glu-Val-Asp-|-.. During activation, the N-terminal disordered prodomain is removed by cleavage. Concomitantly, double cleavage gives rise to a large Caspase-7 subunit p20 and a small Caspase-7 subunit p11. The two large and two small subunits then assemble to form the active CASP7 complex. Can be cleaved and activated by different caspases, depending on the context. Cleaved and activated by initiator caspases (CASP8 and/or CASP9), leading to execution phase of apoptosis. Cleavage and maturation by GZMB regulates granzyme-mediated programmed cell death. Cleavage and maturation by CASP1 regulates pyroptosis. Inhibited by BIRC6; following inhibition of BIRC6-caspase binding by DIABLO/SMAC, BIRC6 is subjected to caspase cleavage, leading to an increase in active caspases. Its function is as follows. Thiol protease involved in different programmed cell death processes, such as apoptosis, pyroptosis or granzyme-mediated programmed cell death, by proteolytically cleaving target proteins. Has a marked preference for Asp-Glu-Val-Asp (DEVD) consensus sequences, with some plasticity for alternate non-canonical sequences. Its involvement in the different programmed cell death processes is probably determined by upstream proteases that activate CASP7. Acts as an effector caspase involved in the execution phase of apoptosis: following cleavage and activation by initiator caspases (CASP8 and/or CASP9), mediates execution of apoptosis by catalyzing cleavage of proteins. Compared to CASP3, acts as a minor executioner caspase and cleaves a limited set of target proteins. Acts as a key regulator of the inflammatory response in response to bacterial infection by catalyzing cleavage and activation of the sphingomyelin phosphodiesterase SMPD1 in the extracellular milieu, thereby promoting membrane repair. Cleaves BIRC6 following inhibition of BIRC6-caspase binding by DIABLO/SMAC. The protein is Caspase-7 of Gallus gallus (Chicken).